A 206-amino-acid polypeptide reads, in one-letter code: LexA repressor (206 aa).

The segment at residues 28–48 (RAEIARRLGFKSANAAEEHLK) is a DNA-binding region (H-T-H motif). Active-site for autocatalytic cleavage activity residues include Ser-123 and Lys-160.

The protein belongs to the peptidase S24 family. As to quaternary structure, homodimer.

The catalysed reaction is Hydrolysis of Ala-|-Gly bond in repressor LexA.. Represses a number of genes involved in the response to DNA damage (SOS response), including recA and lexA. In the presence of single-stranded DNA, RecA interacts with LexA causing an autocatalytic cleavage which disrupts the DNA-binding part of LexA, leading to derepression of the SOS regulon and eventually DNA repair. The chain is LexA repressor from Shewanella halifaxensis (strain HAW-EB4).